A 1083-amino-acid chain; its full sequence is Rho GTPase-activating protein 39 (1083 aa).

At Ser2 the chain carries N-acetylserine. 2 WW domains span residues Asn25–Gly58 and Arg63–Gly97. Residues Lys110–Ala154 form a disordered region. A compositionally biased stretch (low complexity) spans Arg117–Glu141. Ser169 carries the post-translational modification Phosphoserine. The interval Ala226–Gln369 is disordered. The span at Pro245 to Thr256 shows a compositional bias: polar residues. The span at Pro268–Glu280 shows a compositional bias: basic and acidic residues. Ser286, Ser384, Ser388, Ser406, and Ser407 each carry phosphoserine. Disordered regions lie at residues Gly405–Gly545 and Met570–Val599. 2 stretches are compositionally biased toward polar residues: residues Ser474 to Ser488 and Arg573 to Gly582. 4 positions are modified to phosphoserine: Ser604, Ser690, Ser715, and Ser726. The 158-residue stretch at Trp722–Lys879 folds into the MyTH4 domain. The Rho-GAP domain maps to Ser890–Phe1078.

Its subcellular location is the nucleus. This chain is Rho GTPase-activating protein 39 (ARHGAP39), found in Homo sapiens (Human).